The chain runs to 98 residues: Integration host factor subunit alpha (98 aa).

It belongs to the bacterial histone-like protein family. In terms of assembly, heterodimer of an alpha and a beta chain.

In terms of biological role, this protein is one of the two subunits of integration host factor, a specific DNA-binding protein that functions in genetic recombination as well as in transcriptional and translational control. The protein is Integration host factor subunit alpha of Acinetobacter baumannii (strain AB307-0294).